The chain runs to 466 residues: Cysteine--tRNA ligase (466 aa).

C27 lines the Zn(2+) pocket. Positions 29–39 (PTVYNYIHIGN) match the 'HIGH' region motif. Residues C207, H232, and E236 each contribute to the Zn(2+) site. A 'KMSKS' region motif is present at residues 264–268 (KMSKS). K267 is a binding site for ATP.

This sequence belongs to the class-I aminoacyl-tRNA synthetase family. In terms of assembly, monomer. Zn(2+) serves as cofactor.

The protein resides in the cytoplasm. The enzyme catalyses tRNA(Cys) + L-cysteine + ATP = L-cysteinyl-tRNA(Cys) + AMP + diphosphate. This is Cysteine--tRNA ligase from Thermoanaerobacter pseudethanolicus (strain ATCC 33223 / 39E) (Clostridium thermohydrosulfuricum).